A 617-amino-acid chain; its full sequence is Erythritol-mannosyl-transferase 1 (617 aa).

Disordered regions lie at residues 365–396 (RNPG…IDSR) and 567–617 (RQRK…VTNP). The span at 371–381 (GFTSPLNSPTA) shows a compositional bias: polar residues. Over residues 386–396 (KWDEKRPIDSR) the composition is skewed to basic and acidic residues. Positions 578–603 (TAKTSLSVDTTEVATPTFTDTETSLS) are enriched in polar residues.

This sequence belongs to the UDP-glycosyltransferase family.

It functions in the pathway secondary metabolite biosynthesis. Functionally, glycosyltransferase; part of the gene cluster that mediates the biosynthesis of mannosylerythritol lipids (MELs), surface-active substances that enhance the availability of water-insoluble substrates. Depending on the number of acetyl groups, mannosylerythritol lipids can be differentiated into MEL A (fully acetylated), MEL B and MEL C (monoacetylated at R-6 and R-4, respectively), and the fully deacetylated MEL D. The first step in the pathway is the generation of mannosylerythritol by the glycosyltransferase EMT1 which catalyzes the transfer of GDP-mannose to the C-4 atom of meso-erythritol. This reaction has to be stereospecific, since only mannosyl-D-erythritol is generated. The produced disaccharide is subsequently acylated with fatty acids of various lengths by the acyltransferases MAC1 and MAC2 at positions C-2 and C-3, repectively. The existence of MEL derivatives which carry an acetyl group at C-2 implies that at least MAC1 also accepts acetyl-CoA as a donor. The final step of MEL biosynthesis is the acetylation of the fully acylated mannosylerythritol lipids catalyzed by the acetyl-CoA-dependent acetyltransferase MAT1. MAT1 displays a relaxed regioselectivity and is able to transfer acetylgroups to both positions C-4 and C-6 of the mannosyl moiety. The chain is Erythritol-mannosyl-transferase 1 from Pseudozyma antarctica (strain T-34) (Yeast).